We begin with the raw amino-acid sequence, 778 residues long: Mitochondrial intermediate peptidase (778 aa).

The transit peptide at 1–37 directs the protein to the mitochondrion; sequence MIRTVTRPRQWQRWVYSSCLLQRAVPPAAARQQPRFT. H557 provides a ligand contact to Zn(2+). The active site involves E558. Zn(2+) contacts are provided by H561 and H564.

This sequence belongs to the peptidase M3 family. Zn(2+) is required as a cofactor.

The protein localises to the mitochondrion matrix. The catalysed reaction is Release of an N-terminal octapeptide as second stage of processing of some proteins imported into the mitochondrion.. Its function is as follows. Cleaves proteins, imported into the mitochondrion, to their mature size. While most mitochondrial precursor proteins are processed to the mature form in one step by mitochondrial processing peptidase (MPP), the sequential cleavage by MIP of an octapeptide after initial processing by MPP is a required step for a subgroup of nuclear-encoded precursor proteins destined for the matrix or the inner membrane. The polypeptide is Mitochondrial intermediate peptidase (OCT1) (Chaetomium globosum (strain ATCC 6205 / CBS 148.51 / DSM 1962 / NBRC 6347 / NRRL 1970) (Soil fungus)).